Reading from the N-terminus, the 348-residue chain is Arginine kinase Oct f 2 (348 aa).

Positions 1–83 (MAEELFKTLQ…LDAVIMDYHK (83 aa)) constitute a Phosphagen kinase N-terminal domain. 56–60 (GVGIY) is a substrate binding site. One can recognise a Phosphagen kinase C-terminal domain in the interval 111 to 347 (MIVSTRVRVG…NEIIREETNS (237 aa)). ATP contacts are provided by residues 114 to 118 (STRVR) and His177. Glu217 contributes to the substrate binding site. Arg221 serves as a coordination point for ATP. Substrate is bound at residue Cys263. Residues 272–276 (RASVH) and 300–305 (RGIHGE) contribute to the ATP site. Glu305 is a binding site for substrate.

It belongs to the ATP:guanido phosphotransferase family. Muscle (at protein level).

It carries out the reaction L-arginine + ATP = N(omega)-phospho-L-arginine + ADP + H(+). Catalyzes the reversible transfer of high energy ATP gamma-phosphate group to L-arginine. The polypeptide is Arginine kinase Oct f 2 (Amphioctopus fangsiao (Ocellated octopus)).